Consider the following 21-residue polypeptide: Nitrilase (21 aa).

This sequence belongs to the carbon-nitrogen hydrolase superfamily. Nitrilase family.

The catalysed reaction is a nitrile + 2 H2O = a carboxylate + NH4(+). Acts on many kinds of nitrile compounds such as aliphatic, aromatic, and heterocyclic mononitriles or dinitriles. Prefers S-(-)-2-(4'-isobutylphenyl)-propionitrile to R-(+)-2-(4'-isobutylphenyl)-propionitrile as the substrate. The sequence is that of Nitrilase from Acinetobacter sp. (strain AK226).